The following is a 256-amino-acid chain: MNNIWWQTKGQGNVHLVLLHGWGLNAEVWRCIDEELSSHFTLHLVDLPGFGRSRGFGALSLADMAEAVLQQAPDKAIWLGWSLGGLVASQIALTHPERVQALVTVASSPCFSARDEWPGIKPDVLAGFQQQLSDDFQRTVERFLALQTMGTETARQDARALKKTVLALPMPEVDVLNGGLEILKTVDLRQPLQNVPMPFLRLYGYLDGLVPRKVVPMLDKLWPHSESYIFAKAAHAPFISHPVEFCHLLVALKQRV.

Residues 15–242 enclose the AB hydrolase-1 domain; it reads HLVLLHGWGL…AAHAPFISHP (228 aa). Residues Trp-22, 82-83, and 143-147 contribute to the substrate site; these read SL and FLALQ. The active-site Nucleophile is Ser-82. Active-site residues include Asp-207 and His-235. His-235 lines the substrate pocket.

It belongs to the AB hydrolase superfamily. Carboxylesterase BioH family. Monomer.

The protein localises to the cytoplasm. It carries out the reaction 6-carboxyhexanoyl-[ACP] methyl ester + H2O = 6-carboxyhexanoyl-[ACP] + methanol + H(+). It participates in cofactor biosynthesis; biotin biosynthesis. Functionally, the physiological role of BioH is to remove the methyl group introduced by BioC when the pimeloyl moiety is complete. It allows to synthesize pimeloyl-ACP via the fatty acid synthetic pathway through the hydrolysis of the ester bonds of pimeloyl-ACP esters. This chain is Pimeloyl-[acyl-carrier protein] methyl ester esterase, found in Escherichia coli O139:H28 (strain E24377A / ETEC).